The chain runs to 369 residues: Gap junction alpha-5 protein (369 aa).

The Cytoplasmic segment spans residues 2–19 (GDWSFLGEFLEEVHKHST). A helical transmembrane segment spans residues 20–40 (VVGKVWLTVLFIFRMLVLGTA). Residues 41–76 (AGPLWGDEQSDFMCDTQQPGCENVCYDKAFPISHVR) lie on the Extracellular side of the membrane. The helical transmembrane segment at 77-97 (FWVLQIIFVSTPSLVYMGHAM) threads the bilayer. Topologically, residues 98-169 (HTVRMEEKRK…YSILIRTAME (72 aa)) are cytoplasmic. Residues 170 to 190 (IAFIVGQYILYGIFLETLYIC) form a helical membrane-spanning segment. Residues 191–210 (QRAPCPHPVNCYVSRPTEKN) are Extracellular-facing. Residues 211 to 231 (VFIIFMLAVAVLSLFLSLAEL) form a helical membrane-spanning segment. Residues 232–369 (YHLGWKKAKE…SKARSDDLSV (138 aa)) are Cytoplasmic-facing. A disordered region spans residues 347–369 (NEKRRFSKASRASSKARSDDLSV).

The protein belongs to the connexin family. Alpha-type (group II) subfamily. In terms of assembly, a connexon is composed of a hexamer of connexins. Mostly in heart, and in the whole embryo, liver, stomach, and pectoral muscle.

Its subcellular location is the cell membrane. The protein localises to the cell junction. It localises to the gap junction. One gap junction consists of a cluster of closely packed pairs of transmembrane channels, the connexons, through which materials of low MW diffuse from one cell to a neighboring cell. This chain is Gap junction alpha-5 protein (GJA5), found in Gallus gallus (Chicken).